The chain runs to 388 residues: LL-diaminopimelate aminotransferase (388 aa).

The substrate site is built by Tyr-15 and Gly-40. Residues Tyr-69, 103 to 104 (SK), Tyr-128, Asn-178, Tyr-209, and 237 to 239 (SLS) contribute to the pyridoxal 5'-phosphate site. 3 residues coordinate substrate: Lys-104, Tyr-128, and Asn-178. Lys-240 carries the N6-(pyridoxal phosphate)lysine modification. Residue Arg-248 coordinates pyridoxal 5'-phosphate. Arg-366 is a binding site for substrate.

Belongs to the class-I pyridoxal-phosphate-dependent aminotransferase family. LL-diaminopimelate aminotransferase subfamily. Homodimer. Pyridoxal 5'-phosphate is required as a cofactor.

The catalysed reaction is (2S,6S)-2,6-diaminopimelate + 2-oxoglutarate = (S)-2,3,4,5-tetrahydrodipicolinate + L-glutamate + H2O + H(+). Its pathway is amino-acid biosynthesis; L-lysine biosynthesis via DAP pathway; LL-2,6-diaminopimelate from (S)-tetrahydrodipicolinate (aminotransferase route): step 1/1. Its function is as follows. Involved in the synthesis of meso-diaminopimelate (m-DAP or DL-DAP), required for both lysine and peptidoglycan biosynthesis. Catalyzes the direct conversion of tetrahydrodipicolinate to LL-diaminopimelate. Can also use m-DAP instead of LL-DAP as the amino-group donor. The protein is LL-diaminopimelate aminotransferase of Syntrophobacter fumaroxidans (strain DSM 10017 / MPOB).